Reading from the N-terminus, the 356-residue chain is MRVADFSFELPESLIAHYPQPERSGCRLLQLDGPSGELKHGVFTDLLDNLEAGDLLVFNNTRVIPARMFGRKVSGGKIEVLVERVLDDHRVLAHVRASKAPKPGTDLLLGDDESIAATMVARHDTLFELRFNDERDVFTILNAVGHMPLPPYIDRPDEDADRELYQTVYSEKPGAVAAPTAGLHFDEPLLAALREKGIEMAFVTLHVGAGTFQPVRVETIEEHVMHAEYAEVPQEVVDAVLACKARGKRVVAVGTTSVRSLESAANASKEALIAPFFDDTSIFIFPGYHYQVVDALVTNFHLPESTLIMLVSAFAGYKNTMHAYQQAVAEQYRFFSYGDAMFISRNPQAEQESVGA.

This sequence belongs to the QueA family. As to quaternary structure, monomer.

Its subcellular location is the cytoplasm. The enzyme catalyses 7-aminomethyl-7-carbaguanosine(34) in tRNA + S-adenosyl-L-methionine = epoxyqueuosine(34) in tRNA + adenine + L-methionine + 2 H(+). It functions in the pathway tRNA modification; tRNA-queuosine biosynthesis. Transfers and isomerizes the ribose moiety from AdoMet to the 7-aminomethyl group of 7-deazaguanine (preQ1-tRNA) to give epoxyqueuosine (oQ-tRNA). This is S-adenosylmethionine:tRNA ribosyltransferase-isomerase from Serratia proteamaculans (strain 568).